The following is a 603-amino-acid chain: Conglutin beta 2 (603 aa).

The signal sequence occupies residues 1–30 (MANMRVKFPTLVLLLGIVFLMAVSIGIAYG). Basic and acidic residues predominate over residues 36–105 (KNHERPQERE…REPSRGREQE (70 aa)). Disordered regions lie at residues 36-177 (KNHE…RNPY), 343-363 (DGQE…DQGV), and 375-399 (LRKH…LRSD). A compositionally biased stretch (low complexity) spans 137 to 147 (QGSSSSSGRQS). Residues 148-172 (GYERREQREEREQQQEQDSRSESRR) are compositionally biased toward basic and acidic residues. The 159-residue stretch at 177-335 (YYFSYERFQT…TFNTRYEEIQ (159 aa)) folds into the Cupin type-1 1 domain. Low complexity predominate over residues 381–393 (SSSGKGKPSESGP). One can recognise a Cupin type-1 2 domain in the interval 394–554 (FNLRSDEPIY…TFPGSVEDVE (161 aa)). An N-linked (GlcNAc...) asparagine glycan is attached at Asn504. The segment covering 564-574 (YFANAQPQQQQ) has biased composition (low complexity). The tract at residues 564–583 (YFANAQPQQQQQREKEGRRG) is disordered.

The protein belongs to the 7S seed storage protein family. In terms of assembly, component of globulins complexes which accumulate in seeds.

Its function is as follows. Seed storage protein. Accumulates during seed development and is hydrolyzed after germination to provide a carbon and nitrogen source for the developing seedling. The polypeptide is Conglutin beta 2 (Lupinus angustifolius (Narrow-leaved blue lupine)).